Here is a 348-residue protein sequence, read N- to C-terminus: Protein RecA (348 aa).

Residue glycine 64–threonine 71 participates in ATP binding.

The protein belongs to the RecA family. Monomer; forms higher-order oligomers. Interacts with RecU. Interacts with DprA (smf). Interacts with RecD2.

The protein resides in the cytoplasm. It localises to the nucleoid. Functionally, multifunctional protein involved in homologous recombination, DNA repair and competence. Can catalyze the hydrolysis of (d)ATP in the presence of single-stranded (ss)DNA; prefers dATP at least in vitro, catalyzes the dATP-dependent uptake of ssDNA by duplex DNA, and the dATP-dependent hybridization of homologous ssDNA (strand exchange). RecA-ATP cannot catalyze homologous DNA strand exchange; SsbA and DprA activate strand exchange by RecA-ATP. It interacts with LexA causing its activation and leading to its autocatalytic cleavage. Hydrolysis of ATP in the presence of ssDNA is partially inhibited by RecU. Required for DNA transformation; protects transforming DNA from degradation, possibly in combination with DprA. Blocks replication of both leading and lagging strand DNA in the presence of RecO and SsbA; RecD2 is able to overcome this blockage. In terms of biological role, recruited to repair centers (RCs), foci that are the site of double-stranded DNA break(s), after RecN. Concomitant with the appearance of RecO at the RCs, RecA forms threads that extend from RCs toward the opposite cell half, possibly searching for sequence homology along the sister chromosome. The threads disappear after about 2 hours. Thread formation is absolutely dependent on RecJ or AadAB. Thread formation is also dependent on RarA. The protein is Protein RecA of Bacillus subtilis (strain 168).